Here is a 28-residue protein sequence, read N- to C-terminus: ASGGTVGXYGAWMRSXSLVSXSTITTFS.

Functionally, antibacterial activity against X.campestris, especially strain G, and P.solacearum PO1. This Bacillus subtilis protein is Antibacterial protein LC3.